A 230-amino-acid polypeptide reads, in one-letter code: Large ribosomal subunit protein uL1 (230 aa).

The protein belongs to the universal ribosomal protein uL1 family. In terms of assembly, part of the 50S ribosomal subunit.

Functionally, binds directly to 23S rRNA. The L1 stalk is quite mobile in the ribosome, and is involved in E site tRNA release. Protein L1 is also a translational repressor protein, it controls the translation of the L11 operon by binding to its mRNA. This is Large ribosomal subunit protein uL1 from Metamycoplasma arthritidis (strain 158L3-1) (Mycoplasma arthritidis).